The chain runs to 244 residues: Probable H/ACA ribonucleoprotein complex subunit 1-like protein (244 aa).

Disordered stretches follow at residues methionine 1–aspartate 53 and phenylalanine 145–glutamate 244. RGG-box stretches follow at residues arginine 4–glycine 51 and arginine 153–glycine 222. Positions arginine 160–glycine 173 are enriched in basic and acidic residues. 2 stretches are compositionally biased toward gly residues: residues arginine 174–arginine 201 and phenylalanine 208–glycine 217. A compositionally biased stretch (basic and acidic residues) spans glycine 218 to tyrosine 228.

Belongs to the GAR1 family. In terms of assembly, component of the small nucleolar ribonucleoprotein particle containing H/ACA-type snoRNAs (H/ACA snoRNPs).

The protein resides in the nucleus. It localises to the nucleolus. Functionally, required for ribosome biogenesis. Part of a complex which catalyzes pseudouridylation of rRNA. This involves the isomerization of uridine such that the ribose is subsequently attached to C5, instead of the normal N1. Pseudouridine ('psi') residues may serve to stabilize the conformation of rRNAs. Involved in phase separation into sub-nucleolar condensates. Essential for normal development and also plays a role in fertility. This is Probable H/ACA ribonucleoprotein complex subunit 1-like protein from Caenorhabditis elegans.